The following is a 308-amino-acid chain: MNKDNTLHTIMKITMFSEVSVGISANSILFFAHLCMLLGENRPKPFHLYIVSLSLTQLILLITMGLIAVDMFMSWGRWDSTPCQSLIYLHRLLRGFTLCAACLLNVFWMITLSPRSSCLSKFKHNSPHHISGAFLFLCVLYMSFSSHLLVSIIATPNLTSNIFMYVTQSCSLLPMSYSRTSTFSTTIAIREAFLISLMALSSGFMVTLLWRHKKQAQHLHSTSLSSKASPERRATRTILLLMSFFVVLYILENVVFYSRMKFKDGSMFYCVQIIVSHSYATISPFVFICTEKHMTKILRSVCTRIINI.

At 1-18 (MNKDNTLHTIMKITMFSE) the chain is on the extracellular side. The chain crosses the membrane as a helical span at residues 19-39 (VSVGISANSILFFAHLCMLLG). Residues 40-48 (ENRPKPFHL) lie on the Cytoplasmic side of the membrane. Residues 49-69 (YIVSLSLTQLILLITMGLIAV) traverse the membrane as a helical segment. The Extracellular portion of the chain corresponds to 70–91 (DMFMSWGRWDSTPCQSLIYLHR). C83 and C170 are oxidised to a cystine. A helical transmembrane segment spans residues 92–112 (LLRGFTLCAACLLNVFWMITL). The Cytoplasmic segment spans residues 113–132 (SPRSSCLSKFKHNSPHHISG). The chain crosses the membrane as a helical span at residues 133 to 153 (AFLFLCVLYMSFSSHLLVSII). The Extracellular segment spans residues 154 to 188 (ATPNLTSNIFMYVTQSCSLLPMSYSRTSTFSTTIA). An N-linked (GlcNAc...) asparagine glycan is attached at N157. The chain crosses the membrane as a helical span at residues 189–209 (IREAFLISLMALSSGFMVTLL). The Cytoplasmic segment spans residues 210-236 (WRHKKQAQHLHSTSLSSKASPERRATR). Residues 237–257 (TILLLMSFFVVLYILENVVFY) form a helical membrane-spanning segment. The Extracellular portion of the chain corresponds to 258–267 (SRMKFKDGSM). Residues 268–288 (FYCVQIIVSHSYATISPFVFI) traverse the membrane as a helical segment. Residues 289 to 308 (CTEKHMTKILRSVCTRIINI) are Cytoplasmic-facing.

The protein belongs to the G-protein coupled receptor 1 family.

The protein resides in the cell membrane. Functionally, putative pheromone receptor implicated in the regulation of social as well as reproductive behavior. This Rattus norvegicus (Rat) protein is Vomeronasal type-1 receptor 92 (Vom1r92).